A 284-amino-acid chain; its full sequence is MQLDPKGWFTEVCKEGGLAFSLAIREKLHAETTPYQYIEIYQTETFGRLMVIDGFIMLSGRDNFFYHEMMAHPVLFTHPHPQRVLIIGGGDCGTLREVLKHDVVEKVQQVEIDERVTRLAEKYFPELCQSNDDPRAHFHFGDGLRFVAEAPANSVDVIIIDSTDPIGSAEGLFQASFYADCQRLLGEKGILVHQSESPLIHLDLLNKMRAEMKKGGFPQVRTLTYPQCVYPSGWWSATLAGHTLSCFRERDATAKIFPTRYYNVDIHRASLAVPEFLRQTEESS.

Residues 6 to 242 enclose the PABS domain; the sequence is KGWFTEVCKE…GWWSATLAGH (237 aa). Residue Gln-36 participates in S-methyl-5'-thioadenosine binding. 2 residues coordinate spermidine: His-67 and Asp-91. Residues Glu-111 and 142–143 each bind S-methyl-5'-thioadenosine; that span reads DG. Catalysis depends on Asp-161, which acts as the Proton acceptor. 161 to 164 lines the spermidine pocket; sequence DSTD.

This sequence belongs to the spermidine/spermine synthase family. As to quaternary structure, homodimer or homotetramer.

It localises to the cytoplasm. It carries out the reaction S-adenosyl 3-(methylsulfanyl)propylamine + putrescine = S-methyl-5'-thioadenosine + spermidine + H(+). The protein operates within amine and polyamine biosynthesis; spermidine biosynthesis; spermidine from putrescine: step 1/1. Catalyzes the irreversible transfer of a propylamine group from the amino donor S-adenosylmethioninamine (decarboxy-AdoMet) to putrescine (1,4-diaminobutane) to yield spermidine. The chain is Polyamine aminopropyltransferase from Nitrosococcus oceani (strain ATCC 19707 / BCRC 17464 / JCM 30415 / NCIMB 11848 / C-107).